A 327-amino-acid chain; its full sequence is L-lactate dehydrogenase (327 aa).

NAD(+)-binding positions include V18, D39, K44, Y69, and 83 to 84 (GA). Residues Q86, R92, and 124–127 (NPVD) each bind substrate. NAD(+)-binding positions include 122–124 (AAN) and S147. 152–155 (DSAR) lines the substrate pocket. Beta-D-fructose 1,6-bisphosphate contacts are provided by R157 and H172. Catalysis depends on H179, which acts as the Proton acceptor. Y224 is subject to Phosphotyrosine. Substrate is bound at residue T233.

This sequence belongs to the LDH/MDH superfamily. LDH family. In terms of assembly, homotetramer.

The protein localises to the cytoplasm. It carries out the reaction (S)-lactate + NAD(+) = pyruvate + NADH + H(+). It functions in the pathway fermentation; pyruvate fermentation to lactate; (S)-lactate from pyruvate: step 1/1. With respect to regulation, allosterically activated by fructose 1,6-bisphosphate (FBP). Functionally, catalyzes the conversion of lactate to pyruvate. This is L-lactate dehydrogenase from Streptococcus pyogenes serotype M3 (strain SSI-1).